A 220-amino-acid polypeptide reads, in one-letter code: UPF0319 protein YccT (220 aa).

The N-terminal stretch at 1–20 (MKTGALATFLALCLPVTVFA) is a signal peptide.

This sequence belongs to the UPF0319 family.

This chain is UPF0319 protein YccT, found in Salmonella paratyphi A (strain ATCC 9150 / SARB42).